The sequence spans 141 residues: MGMISEFRTFAVRGNVIDLAVGVIIGAAFGKIVDSVVNDLIMPLVGRVIGKLDFSSMFIVLADPPPGTPTTLDALKKAGVPVFAYGNFLTIVVNFLILAFIIFLMVRAFNRMRAAEPEAAPAAPPEEVVLLREIRDSLKTR.

The next 3 helical transmembrane spans lie at 16–36 (VIDLAVGVIIGAAFGKIVDSV), 40–60 (LIMPLVGRVIGKLDFSSMFIV), and 86–106 (GNFLTIVVNFLILAFIIFLMV).

The protein belongs to the MscL family. Homopentamer.

It is found in the cell inner membrane. Its function is as follows. Channel that opens in response to stretch forces in the membrane lipid bilayer. May participate in the regulation of osmotic pressure changes within the cell. This Cupriavidus necator (strain ATCC 17699 / DSM 428 / KCTC 22496 / NCIMB 10442 / H16 / Stanier 337) (Ralstonia eutropha) protein is Large-conductance mechanosensitive channel.